The chain runs to 788 residues: Xylulose-5-phosphate phosphoketolase (788 aa).

This sequence belongs to the XFP family. In terms of assembly, homohexamer. Thiamine diphosphate is required as a cofactor.

The enzyme catalyses D-xylulose 5-phosphate + phosphate = acetyl phosphate + D-glyceraldehyde 3-phosphate + H2O. The polypeptide is Xylulose-5-phosphate phosphoketolase (xpkA) (Lactiplantibacillus pentosus (Lactobacillus pentosus)).